Here is a 404-residue protein sequence, read N- to C-terminus: uncharacterized protein (404 aa).

This sequence belongs to the lymphocryptovirus BTRF1 family.

This is an uncharacterized protein from Homo sapiens (Human).